Reading from the N-terminus, the 86-residue chain is Large ribosomal subunit protein eL43 (86 aa).

Zn(2+) is bound by residues C40, C43, C58, and C61. A C4-type zinc finger spans residues 40 to 61; that stretch reads CPFCRSKAVIREAYGIYRCKKC.

The protein belongs to the eukaryotic ribosomal protein eL43 family. Putative zinc-binding subfamily. In terms of assembly, part of the 50S ribosomal subunit. Zn(2+) serves as cofactor.

Its function is as follows. Binds to the 23S rRNA. This Nanoarchaeum equitans (strain Kin4-M) protein is Large ribosomal subunit protein eL43.